A 1830-amino-acid polypeptide reads, in one-letter code: Urea amidolyase (1830 aa).

ATP-binding positions include 115 to 122 (GAIVIGKT), K740, E823, and N858. A Biotin carboxylation domain is found at 625 to 1068 (PFETVLIANR…ATKILDSYDY (444 aa)). The ATP-grasp domain maps to 744–941 (REIAEKAGVP…LVEWMLRIAA (198 aa)). The Biotinyl-binding domain maps to 1752-1830 (AVEEEYPEDA…DAGDLVAVIQ (79 aa)). An N6-biotinyllysine modification is found at K1796.

Belongs to the DUR1,2 family. Monomer. Biotin serves as cofactor.

It catalyses the reaction urea + hydrogencarbonate + ATP = urea-1-carboxylate + ADP + phosphate + H(+). It carries out the reaction urea-1-carboxylate + H2O + 3 H(+) = 2 NH4(+) + 2 CO2. The protein operates within nitrogen metabolism; urea degradation; CO(2) and NH(3) from urea (allophanate route): step 1/2. It functions in the pathway nitrogen metabolism; urea degradation; CO(2) and NH(3) from urea (allophanate route): step 2/2. Involved in uracil catabolism. Hydrolysis of urea to ammonia and CO(2). This Lachancea kluyveri (Yeast) protein is Urea amidolyase (DUR1,2).